An 87-amino-acid polypeptide reads, in one-letter code: U3-theraphotoxin-Hhn1q (87 aa).

The first 24 residues, 1 to 24 (MVNMKASMFLTFAGLVLLFVVCYA), serve as a signal peptide directing secretion. Residues 25-52 (SESEEKEFPKEMLSSIFAVDNDFKQEER) constitute a propeptide that is removed on maturation. 3 disulfide bridges follow: C54–C67, C61–C72, and C66–C79.

It belongs to the neurotoxin 10 (Hwtx-1) family. 51 (Hntx-8) subfamily. Hntx-8 sub-subfamily. In terms of tissue distribution, expressed by the venom gland.

The protein resides in the secreted. Its function is as follows. Ion channel inhibitor. The protein is U3-theraphotoxin-Hhn1q of Cyriopagopus hainanus (Chinese bird spider).